The following is a 292-amino-acid chain: NAD kinase (292 aa).

D72 functions as the Proton acceptor in the catalytic mechanism. NAD(+) contacts are provided by residues 72-73 (DG), 146-147 (NE), H157, R174, D176, and 187-192 (TAYALS).

It belongs to the NAD kinase family. The cofactor is a divalent metal cation.

It localises to the cytoplasm. The enzyme catalyses NAD(+) + ATP = ADP + NADP(+) + H(+). Its function is as follows. Involved in the regulation of the intracellular balance of NAD and NADP, and is a key enzyme in the biosynthesis of NADP. Catalyzes specifically the phosphorylation on 2'-hydroxyl of the adenosine moiety of NAD to yield NADP. This Shewanella oneidensis (strain ATCC 700550 / JCM 31522 / CIP 106686 / LMG 19005 / NCIMB 14063 / MR-1) protein is NAD kinase.